A 315-amino-acid polypeptide reads, in one-letter code: Fe(3+)-citrate-binding protein YfmC (315 aa).

The signal sequence occupies residues 1–18 (MRTYSNKLIAIMSVLLLA). Residue cysteine 19 is the site of N-palmitoyl cysteine attachment. Cysteine 19 is lipidated: S-diacylglycerol cysteine. The segment covering 27 to 36 (SSQNNNGSGK) has biased composition (low complexity). The tract at residues 27-52 (SSQNNNGSGKSESKDSRVIHDEEGKT) is disordered. Residues 37-51 (SESKDSRVIHDEEGK) are compositionally biased toward basic and acidic residues. One can recognise a Fe/B12 periplasmic-binding domain in the interval 60–315 (RVVVLELSFL…KDVLKKVYNK (256 aa)).

Belongs to the bacterial solute-binding protein 8 family. The complex is composed of one ATP-binding protein (YfmF), two transmembrane proteins (YfmD and YfmE) and a solute-binding protein (YfmC).

The protein localises to the cell membrane. Its function is as follows. Part of the ABC transporter complex YfmCDEF involved in citrate-dependent Fe(3+) import. Binds citrate-dependent Fe(3+) and delivers it to the surface of YfmDE. The sequence is that of Fe(3+)-citrate-binding protein YfmC (yfmC) from Bacillus subtilis (strain 168).